A 229-amino-acid chain; its full sequence is Large ribosomal subunit protein uL1 (229 aa).

Belongs to the universal ribosomal protein uL1 family. In terms of assembly, part of the 50S ribosomal subunit.

Its function is as follows. Binds directly to 23S rRNA. The L1 stalk is quite mobile in the ribosome, and is involved in E site tRNA release. In terms of biological role, protein L1 is also a translational repressor protein, it controls the translation of the L11 operon by binding to its mRNA. The sequence is that of Large ribosomal subunit protein uL1 from Ureaplasma urealyticum serovar 10 (strain ATCC 33699 / Western).